A 285-amino-acid polypeptide reads, in one-letter code: MKYIGAHVSAAGGLANAPARAAEIGATAFALFTKNQRQWRAAPLTPQVIDDFKIACEKYHFSAAQILPHDSYLINLGHPVSEALEKSRDAFLDEMQRCEQLGLTLLNFHPGSHLMQIAQEDCLARIAESINIALAQTEGVTAVIENTAGQGSNLGFEFEQLAAIIDGVEDKSRVGVCIDTCHAFAAGYDLRTPEACEKTFAEFGKIVGFQYLRGMHLNDAKSAFGSRVDRHHSLGEGNIGHDAFRWIMQDARFDGIPLILETINPDIWAEEIAWLKAQQIAEAMA.

Zn(2+) is bound by residues H69, H109, E145, D179, H182, H216, D229, H231, and E261.

Belongs to the AP endonuclease 2 family. Zn(2+) serves as cofactor.

It catalyses the reaction Endonucleolytic cleavage to 5'-phosphooligonucleotide end-products.. Its function is as follows. Endonuclease IV plays a role in DNA repair. It cleaves phosphodiester bonds at apurinic or apyrimidinic (AP) sites, generating a 3'-hydroxyl group and a 5'-terminal sugar phosphate. The sequence is that of Probable endonuclease 4 from Salmonella typhi.